The primary structure comprises 181 residues: ATP-dependent protease subunit HslV (181 aa).

Residue threonine 7 is part of the active site. The Na(+) site is built by alanine 166, cysteine 169, and threonine 172.

The protein belongs to the peptidase T1B family. HslV subfamily. A double ring-shaped homohexamer of HslV is capped on each side by a ring-shaped HslU homohexamer. The assembly of the HslU/HslV complex is dependent on binding of ATP.

It localises to the cytoplasm. It catalyses the reaction ATP-dependent cleavage of peptide bonds with broad specificity.. Its activity is regulated as follows. Allosterically activated by HslU binding. In terms of biological role, protease subunit of a proteasome-like degradation complex believed to be a general protein degrading machinery. The polypeptide is ATP-dependent protease subunit HslV (Anaeromyxobacter sp. (strain Fw109-5)).